The following is a 354-amino-acid chain: Kelch domain-containing protein 8B (354 aa).

Kelch repeat units lie at residues 1–31, 32–79, 81–127, 128–175, 176–222, 224–281, 282–329, and 331–354; these read MATG…FQDG, HLLV…VLGK, VLVV…ERDG, MVYA…LHGN, KIYV…MAEG, VFSL…SLGD, HVVA…QAGP, and LFAI…RDGV.

Its subcellular location is the cytoplasm. The protein resides in the midbody. Its function is as follows. Involved in pinching off the separated nuclei at the cleavage furrow and in cytokinesis. Required for mitotic integrity and maintenance of chromosomal stability. Protects cells against mitotic errors, centrosomal amplification, micronucleus formation and aneuploidy. Plays a key role of midbody function involving abscission of the daughter cells during cytokinesis and appropriate chromosomal and nuclear segregation into the daughter cells. This Bos taurus (Bovine) protein is Kelch domain-containing protein 8B (KLHDC8B).